The sequence spans 285 residues: NADPH-dependent 7-cyano-7-deazaguanine reductase (285 aa).

91–93 (IES) is a binding site for substrate. 93–94 (SK) lines the NADPH pocket. Residue cysteine 192 is the Thioimide intermediate of the active site. Aspartate 199 acts as the Proton donor in catalysis. 231–232 (HE) provides a ligand contact to substrate. Position 260–261 (260–261 (RG)) interacts with NADPH.

This sequence belongs to the GTP cyclohydrolase I family. QueF type 2 subfamily. Homodimer.

The protein localises to the cytoplasm. It carries out the reaction 7-aminomethyl-7-carbaguanine + 2 NADP(+) = 7-cyano-7-deazaguanine + 2 NADPH + 3 H(+). The protein operates within tRNA modification; tRNA-queuosine biosynthesis. Functionally, catalyzes the NADPH-dependent reduction of 7-cyano-7-deazaguanine (preQ0) to 7-aminomethyl-7-deazaguanine (preQ1). In Psychromonas ingrahamii (strain DSM 17664 / CCUG 51855 / 37), this protein is NADPH-dependent 7-cyano-7-deazaguanine reductase.